The primary structure comprises 108 residues: SPbeta prophage-derived uncharacterized HTH-type transcriptional regulator YonR (108 aa).

Residues 6 to 60 (LKKCRTSKGYSQQRMADFLGITRQGYGKYEIGKAEPDLKTLTKLSNILGVSTDFL) form the HTH cro/C1-type domain. Residues 17–36 (QQRMADFLGITRQGYGKYEI) constitute a DNA-binding region (H-T-H motif).

This Bacillus subtilis (strain 168) protein is SPbeta prophage-derived uncharacterized HTH-type transcriptional regulator YonR (yonR).